Here is a 396-residue protein sequence, read N- to C-terminus: Ribosomal RNA large subunit methyltransferase I (396 aa).

The 80-residue stretch at 2–81 (SVRLVLAKGR…ESIDIAFFSR (80 aa)) folds into the PUA domain.

The protein belongs to the methyltransferase superfamily. RlmI family.

It is found in the cytoplasm. It carries out the reaction cytidine(1962) in 23S rRNA + S-adenosyl-L-methionine = 5-methylcytidine(1962) in 23S rRNA + S-adenosyl-L-homocysteine + H(+). Functionally, specifically methylates the cytosine at position 1962 (m5C1962) of 23S rRNA. This chain is Ribosomal RNA large subunit methyltransferase I, found in Escherichia coli (strain K12 / MC4100 / BW2952).